A 479-amino-acid polypeptide reads, in one-letter code: Pyruvate kinase (479 aa).

Substrate is bound at residue Arg36. Residues Asn38, Ser40, and Asp70 each contribute to the K(+) site. Residue 38 to 41 (NFSH) coordinates ATP. ATP-binding residues include Arg77 and Lys160. A Mg(2+)-binding site is contributed by Glu225. 3 residues coordinate substrate: Gly251, Asp252, and Thr284. Asp252 contributes to the Mg(2+) binding site.

This sequence belongs to the pyruvate kinase family. Homotetramer. Mg(2+) serves as cofactor. K(+) is required as a cofactor.

The catalysed reaction is pyruvate + ATP = phosphoenolpyruvate + ADP + H(+). Its pathway is carbohydrate degradation; glycolysis; pyruvate from D-glyceraldehyde 3-phosphate: step 5/5. Allosterically activated by AMP and by several sugar phosphates. Belongs to type II PK. This Buchnera aphidicola subsp. Baizongia pistaciae (strain Bp) protein is Pyruvate kinase (pykA).